The primary structure comprises 447 residues: MGFGDFLSKRMQKSIEKNMKNSTLNEENIKETLKEIRLSLLEADVNIEAAKEIINNVKQKALGGYISEGASAHQQMIKIVHEELVNILGKENAPLDINKKPSVVMMVGLQGSGKTTTANKLAYLLNKKNKKKVLLVGLDIYRPGAIEQLVQLGQKTNTQVFEKGKQDPVKTAEQALEYAKENNFDVVILDTAGRLQVDQVLMKELDNLKKKTSPNEILLVVDGMSGQEIINVTNEFNDKLKLSGVVVTKLDGDARGGATLSISYLTKLPIKFIGEGEGYNALAAFYPKRMADRLMGMGDIETLFERAVENIDERSIQKTMNRMFLGQFDLEDLRNQLAQIAKMGSLNKLMKMLPINKVSESQIQEAQRKLAVFSILMDSMTLKERRDPRVLKAISRKNRIIKGSGRSEKEFNELINSFEKGKKQVLEITKMIKSGRMPNLSKGGFKF.

GTP contacts are provided by residues G108–T115, D190–R194, and T248–D251.

The protein belongs to the GTP-binding SRP family. SRP54 subfamily. As to quaternary structure, part of the signal recognition particle protein translocation system, which is composed of SRP and FtsY. Interacts with RNA.

The protein localises to the cytoplasm. It catalyses the reaction GTP + H2O = GDP + phosphate + H(+). In terms of biological role, involved in targeting and insertion of nascent membrane proteins into the cytoplasmic membrane. Binds to the hydrophobic signal sequence of the ribosome-nascent chain (RNC) as it emerges from the ribosomes. The SRP-RNC complex is then targeted to the cytoplasmic membrane where it interacts with the SRP receptor FtsY. In Mycoplasma mycoides, this protein is Signal recognition particle protein.